The following is a 272-amino-acid chain: Cholesterol 25-hydroxylase (272 aa).

Residue Asn-5 is glycosylated (N-linked (GlcNAc...) asparagine). 3 helical membrane passes run 38–58, 84–104, and 121–141; these read FFPVIFSITTYVGFCLPFVVL, LLPCLGQTLYQHVMFVFPVTL, and LLLLLHHILFCLLLFDMEFFV. The region spanning 129-263 is the Fatty acid hydroxylase domain; the sequence is LFCLLLFDME…FTHWDKILGT (135 aa). A Histidine box-1 motif is present at residues 142-146; that stretch reads WHLLH. The Histidine box-2 motif lies at 157 to 161; sequence HKVHH. N-linked (GlcNAc...) asparagine glycans are attached at residues Asn-163 and Asn-189. Residues 238–244 carry the Histidine box-3 motif; the sequence is HHDLHHS.

This sequence belongs to the sterol desaturase family. Requires Fe cation as cofactor. Post-translationally, N-glycosylated.

The protein resides in the endoplasmic reticulum membrane. It catalyses the reaction cholesterol + AH2 + O2 = 25-hydroxycholesterol + A + H2O. It carries out the reaction cholesterol + NADPH + O2 + H(+) = 25-hydroxycholesterol + NADP(+) + H2O. Catalyzes the formation of 25-hydroxycholesterol from cholesterol, leading to repress cholesterol biosynthetic enzymes. Plays a key role in cell positioning and movement in lymphoid tissues: 25-hydroxycholesterol is an intermediate in biosynthesis of 7-alpha,25-dihydroxycholesterol (7-alpha,25-OHC), an oxysterol that acts as a ligand for the G protein-coupled receptor GPR183/EBI2, a chemotactic receptor for a number of lymphoid cells. May play an important role in regulating lipid metabolism by synthesizing a corepressor that blocks sterol regulatory element binding protein (SREBP) processing. As an interferon-stimulated gene, has broad antiviral activities against a wide range of enveloped viruses, such as vesicular stomatitis virus (VSV) and SARS coronavirus-2 (SARS-CoV-2). Its product, 25-hydroxycholesterol, activates the ER-localized enzyme ACAT to induce internalization of accessible cholesterol on the plasma membrane and restricts SARS-CoV-2 S protein-mediated fusion which inhibits virus replication. In testis, production of 25-hydroxycholesterol by macrophages plays a role in Leydig cell differentiation. Required to restrain inflammation in macrophages: production of 25-hydroxycholesterol protects macrophages from cholesterol overload, thereby preventing mitochondrial DNA release and subsequent activation of the AIM2 inflammasome. The protein is Cholesterol 25-hydroxylase of Homo sapiens (Human).